Here is a 449-residue protein sequence, read N- to C-terminus: Bifunctional F420 biosynthesis protein FbiB (449 aa).

The coenzyme F420:L-glutamate ligase stretch occupies residues Met-1–Gly-245. GTP-binding positions include Leu-21–Phe-24, Ser-51, and Lys-56. Asp-110 is an a divalent metal cation binding site. Asn-113 serves as a coordination point for GTP. Asp-151 and Thr-152 together coordinate a divalent metal cation. The tract at residues Thr-246–Lys-449 is dehydro-coenzyme F420-0 reductase. FMN contacts are provided by residues Arg-261–Arg-265 and Ala-289. Coenzyme F420-(gamma-Glu)n is bound at residue Asp-321. Positions 400 and 437 each coordinate FMN.

The protein in the N-terminal section; belongs to the CofE family. The cofactor is Mg(2+). Mn(2+) is required as a cofactor. K(+) serves as cofactor.

It catalyses the reaction oxidized coenzyme F420-0 + GTP + L-glutamate = oxidized coenzyme F420-1 + GDP + phosphate + H(+). The enzyme catalyses oxidized coenzyme F420-1 + GTP + L-glutamate = oxidized coenzyme F420-2 + GDP + phosphate + H(+). The catalysed reaction is oxidized coenzyme F420-(gamma-L-Glu)(n) + GTP + L-glutamate = oxidized coenzyme F420-(gamma-L-Glu)(n+1) + GDP + phosphate + H(+). It carries out the reaction oxidized coenzyme F420-0 + FMN + H(+) = dehydro coenzyme F420-0 + FMNH2. It participates in cofactor biosynthesis; coenzyme F420 biosynthesis. In terms of biological role, bifunctional enzyme that catalyzes the GTP-dependent successive addition of multiple gamma-linked L-glutamates to the L-lactyl phosphodiester of 7,8-didemethyl-8-hydroxy-5-deazariboflavin (F420-0) to form polyglutamated F420 derivatives, and the FMNH2-dependent reduction of dehydro-F420-0 to form F420-0. The protein is Bifunctional F420 biosynthesis protein FbiB of Mycobacterium avium (strain 104).